The chain runs to 136 residues: Histone H3-7 (136 aa).

The disordered stretch occupies residues M1 to R43. An Asymmetric dimethylarginine modification is found at R3. Position 3 is a citrulline; alternate (R3). T4 is subject to Phosphothreonine. At K5 the chain carries Allysine; alternate. K5 bears the N6,N6,N6-trimethyllysine; alternate mark. K5 is modified (N6,N6-dimethyllysine; alternate). Position 5 is an N6-(2-hydroxyisobutyryl)lysine; alternate (K5). K5 is modified (N6-(beta-hydroxybutyryl)lysine; alternate). The residue at position 5 (K5) is an N6-acetyllysine; alternate. K5 carries the post-translational modification N6-methyllysine; alternate. Q6 carries the 5-glutamyl dopamine; alternate modification. Q6 is modified (5-glutamyl serotonin; alternate). T7 bears the Phosphothreonine mark. Citrulline; alternate is present on R9. A Symmetric dimethylarginine modification is found at R9. K10 is modified (N6,N6,N6-trimethyllysine; alternate). Residue K10 is modified to N6,N6-dimethyllysine; alternate. K10 carries the N6-(2-hydroxyisobutyryl)lysine; alternate modification. At K10 the chain carries N6-(beta-hydroxybutyryl)lysine; alternate. The residue at position 10 (K10) is an N6-acetyllysine; alternate. K10 carries the N6-methyllysine; alternate modification. The residue at position 10 (K10) is an N6-lactoyllysine; alternate. S11 carries the post-translational modification ADP-ribosylserine; alternate. S11 carries the phosphoserine; alternate modification. T12 bears the Phosphothreonine mark. At K15 the chain carries N6-(2-hydroxyisobutyryl)lysine; alternate. N6-(beta-hydroxybutyryl)lysine; alternate is present on K15. K15 carries the N6-acetyllysine; alternate modification. At K15 the chain carries N6-lactoyllysine; alternate. N6-glutaryllysine; alternate is present on K15. K15 carries the post-translational modification N6-succinyllysine; alternate. An Asymmetric dimethylarginine modification is found at R18. R18 is subject to Citrulline; alternate. 2 positions are modified to N6-(2-hydroxyisobutyryl)lysine; alternate: K19 and K24. Residues K19 and K24 each carry the N6-(beta-hydroxybutyryl)lysine; alternate modification. 2 positions are modified to N6-acetyllysine; alternate: K19 and K24. K19 and K24 each carry N6-methyllysine; alternate. 2 positions are modified to N6-lactoyllysine; alternate: K19 and K24. N6-glutaryllysine; alternate is present on residues K19 and K24. K19 and K24 each carry N6-butyryllysine; alternate. At R27 the chain carries Citrulline. N6,N6,N6-trimethyllysine; alternate is present on K28. N6,N6-dimethyllysine; alternate is present on K28. K28 is modified (N6-(2-hydroxyisobutyryl)lysine; alternate). K28 carries the post-translational modification N6-acetyllysine; alternate. K28 is subject to N6-methyllysine; alternate. K28 is modified (N6-lactoyllysine; alternate). The residue at position 28 (K28) is an N6-glutaryllysine; alternate. ADP-ribosylserine; alternate is present on S29. S29 carries the phosphoserine; alternate modification. At K37 the chain carries N6,N6,N6-trimethyllysine; alternate. K37 bears the N6,N6-dimethyllysine; alternate mark. K37 is subject to N6-(2-hydroxyisobutyryl)lysine; alternate. K37 carries the N6-acetyllysine; alternate modification. The residue at position 37 (K37) is an N6-methyllysine; alternate. K38 is subject to N6-methyllysine. Y42 bears the Phosphotyrosine mark. The residue at position 57 (K57) is an N6,N6,N6-trimethyllysine; alternate. N6-(2-hydroxyisobutyryl)lysine; alternate is present on K57. K57 is subject to N6-(beta-hydroxybutyryl)lysine; alternate. K57 is subject to N6-acetyllysine; alternate. K57 bears the N6-lactoyllysine; alternate mark. K57 is modified (N6-glutaryllysine; alternate). K57 bears the N6-succinyllysine; alternate mark. An N6-methyllysine modification is found at K57. Phosphoserine is present on S58. Residues K65 and K80 each carry the N6-(2-hydroxyisobutyryl)lysine; alternate modification. N6-methyllysine; alternate occurs at positions 65 and 80. Residue K80 is modified to N6,N6,N6-trimethyllysine; alternate. Position 80 is an N6,N6-dimethyllysine; alternate (K80). At K80 the chain carries N6-acetyllysine; alternate. K80 carries the post-translational modification N6-lactoyllysine; alternate. K80 bears the N6-glutaryllysine; alternate mark. An N6-succinyllysine; alternate modification is found at K80. Residue T81 is modified to Phosphothreonine. Residue S87 is modified to Phosphoserine. Phosphothreonine is present on T108. An N6-acetyllysine; alternate mark is found at K116 and K123. N6-glutaryllysine; alternate is present on residues K116 and K123. K123 is modified (N6-(2-hydroxyisobutyryl)lysine; alternate). The residue at position 123 (K123) is an N6-methyllysine; alternate. K123 carries the post-translational modification N6-succinyllysine; alternate.

It belongs to the histone H3 family. As to quaternary structure, the nucleosome is a histone octamer containing two molecules each of H2A, H2B, H3 and H4 assembled in one H3-H4 heterotetramer and two H2A-H2B heterodimers. The octamer wraps approximately 147 bp of DNA. During nucleosome assembly the chaperone ASF1A interacts with the histone H3-H4 heterodimer. Acetylation is generally linked to gene activation. Acetylation on Lys-10 (H3K9ac) impairs methylation at Arg-9 (H3R8me2s). Acetylation on Lys-19 (H3K18ac) and Lys-24 (H3K24ac) favors methylation at Arg-18 (H3R17me). Acetylation at Lys-123 (H3K122ac) by EP300/p300 plays a central role in chromatin structure: localizes at the surface of the histone octamer and stimulates transcription, possibly by promoting nucleosome instability. In terms of processing, citrullination at Arg-9 (H3R8ci) and/or Arg-18 (H3R17ci) by PADI4 impairs methylation and represses transcription. Post-translationally, asymmetric dimethylation at Arg-18 (H3R17me2a) by CARM1 is linked to gene activation. Symmetric dimethylation at Arg-9 (H3R8me2s) by PRMT5 is linked to gene repression. Asymmetric dimethylation at Arg-3 (H3R2me2a) by PRMT6 is linked to gene repression and is mutually exclusive with H3 Lys-5 methylation (H3K4me2 and H3K4me3). H3R2me2a is present at the 3' of genes regardless of their transcription state and is enriched on inactive promoters, while it is absent on active promoters. Methylation at Lys-5 (H3K4me), Lys-37 (H3K36me) and Lys-80 (H3K79me) are linked to gene activation. Methylation at Lys-5 (H3K4me) facilitates subsequent acetylation of H3 and H4. Methylation at Lys-80 (H3K79me) is associated with DNA double-strand break (DSB) responses and is a specific target for TP53BP1. Methylation at Lys-10 (H3K9me) and Lys-28 (H3K27me) are linked to gene repression. Methylation at Lys-10 (H3K9me) is a specific target for HP1 proteins (CBX1, CBX3 and CBX5) and prevents subsequent phosphorylation at Ser-11 (H3S10ph) and acetylation of H3 and H4. Methylation at Lys-5 (H3K4me) and Lys-80 (H3K79me) require preliminary monoubiquitination of H2B at 'Lys-120'. Methylation at Lys-10 (H3K9me) and Lys-28 (H3K27me) are enriched in inactive X chromosome chromatin. Monomethylation at Lys-57 (H3K56me1) by EHMT2/G9A in G1 phase promotes interaction with PCNA and is required for DNA replication. In terms of processing, phosphorylated at Thr-4 (H3T3ph) by HASPIN during prophase and dephosphorylated during anaphase. Phosphorylation at Ser-11 (H3S10ph) by AURKB is crucial for chromosome condensation and cell-cycle progression during mitosis and meiosis. In addition phosphorylation at Ser-11 (H3S10ph) by RPS6KA4 and RPS6KA5 is important during interphase because it enables the transcription of genes following external stimulation, like mitogens, stress, growth factors or UV irradiation and result in the activation of genes, such as c-fos and c-jun. Phosphorylation at Ser-11 (H3S10ph), which is linked to gene activation, prevents methylation at Lys-10 (H3K9me) but facilitates acetylation of H3 and H4. Phosphorylation at Ser-11 (H3S10ph) by AURKB mediates the dissociation of HP1 proteins (CBX1, CBX3 and CBX5) from heterochromatin. Phosphorylation at Ser-11 (H3S10ph) is also an essential regulatory mechanism for neoplastic cell transformation. Phosphorylated at Ser-29 (H3S28ph) by MAP3K20 isoform 1, RPS6KA5 or AURKB during mitosis or upon ultraviolet B irradiation. Phosphorylation at Thr-7 (H3T6ph) by PRKCB is a specific tag for epigenetic transcriptional activation that prevents demethylation of Lys-5 (H3K4me) by LSD1/KDM1A. At centromeres, specifically phosphorylated at Thr-12 (H3T11ph) from prophase to early anaphase, by DAPK3 and PKN1. Phosphorylation at Thr-12 (H3T11ph) by PKN1 or isoform M2 of PKM (PKM2) is a specific tag for epigenetic transcriptional activation that promotes demethylation of Lys-10 (H3K9me) by KDM4C/JMJD2C. Phosphorylation at Tyr-42 (H3Y41ph) by JAK2 promotes exclusion of CBX5 (HP1 alpha) from chromatin. Post-translationally, ubiquitinated. Lysine deamination at Lys-5 (H3K4all) to form allysine is mediated by LOXL2. Allysine formation by LOXL2 only takes place on H3K4me3 and results in gene repression. In terms of processing, butyrylation of histones marks active promoters and competes with histone acetylation. It is present during late spermatogenesis. Post-translationally, succinylation at Lys-80 (H3K79succ) by KAT2A takes place with a maximum frequency around the transcription start sites of genes. It gives a specific tag for epigenetic transcription activation. Desuccinylation at Lys-123 (H3K122succ) by SIRT7 in response to DNA damage promotes chromatin condensation and double-strand breaks (DSBs) repair. Serine ADP-ribosylation constitutes the primary form of ADP-ribosylation of proteins in response to DNA damage. Serine ADP-ribosylation at Ser-11 (H3S10ADPr) is mutually exclusive with phosphorylation at Ser-11 (H3S10ph) and impairs acetylation at Lys-10 (H3K9ac).

The protein localises to the nucleus. The protein resides in the chromosome. Its function is as follows. Core component of nucleosome. Nucleosomes wrap and compact DNA into chromatin, limiting DNA accessibility to the cellular machineries which require DNA as a template. Histones thereby play a central role in transcription regulation, DNA repair, DNA replication and chromosomal stability. DNA accessibility is regulated via a complex set of post-translational modifications of histones, also called histone code, and nucleosome remodeling. The sequence is that of Histone H3-7 from Homo sapiens (Human).